We begin with the raw amino-acid sequence, 604 residues long: Aspartate--tRNA(Asp/Asn) ligase (604 aa).

Glu-175 lines the L-aspartate pocket. Positions 199-202 are aspartate; that stretch reads QQFK. Positions 221 and 456 each coordinate L-aspartate. ATP is bound at residue 221–223; it reads RDE. Residue Glu-496 coordinates ATP. Arg-503 is a binding site for L-aspartate. 548–551 contributes to the ATP binding site; sequence GVDR.

Belongs to the class-II aminoacyl-tRNA synthetase family. Type 1 subfamily. Homodimer.

The protein resides in the cytoplasm. The enzyme catalyses tRNA(Asx) + L-aspartate + ATP = L-aspartyl-tRNA(Asx) + AMP + diphosphate. Functionally, aspartyl-tRNA synthetase with relaxed tRNA specificity since it is able to aspartylate not only its cognate tRNA(Asp) but also tRNA(Asn). Reaction proceeds in two steps: L-aspartate is first activated by ATP to form Asp-AMP and then transferred to the acceptor end of tRNA(Asp/Asn). The protein is Aspartate--tRNA(Asp/Asn) ligase of Methylorubrum populi (strain ATCC BAA-705 / NCIMB 13946 / BJ001) (Methylobacterium populi).